The following is a 410-amino-acid chain: Dipeptidase 1 (410 aa).

Positions 1-16 are cleaved as a signal peptide; sequence MVIIWWFWSLLAICAS. Positions 36 and 38 each coordinate Zn(2+). A disulfide bridge links Cys87 with Cys170. N-linked (GlcNAc...) asparagine glycosylation is present at Asn121. Glu141 is a binding site for Zn(2+). Substrate is bound at residue His168. Zn(2+) contacts are provided by His214 and His235. A disulfide bridge links Cys242 with Cys274. Position 246 (Arg246) interacts with substrate. The N-linked (GlcNAc...) asparagine glycan is linked to Asn258. Position 304 (Asp304) interacts with substrate. Asn332 is a glycosylation site (N-linked (GlcNAc...) asparagine). The GPI-anchor amidated serine moiety is linked to residue Ser384. The propeptide at 385–410 is removed in mature form; the sequence is QAHSIHLQTGALVASLASLLFRLHLL.

It belongs to the metallo-dependent hydrolases superfamily. Peptidase M19 family. As to quaternary structure, homodimer; disulfide-linked. Zn(2+) serves as cofactor. As to expression, expressed in heart, lung, skeletal muscle, kidney, liver, and testis. Not detected in brain and spleen.

The protein resides in the apical cell membrane. Its subcellular location is the cell projection. It localises to the microvillus membrane. The catalysed reaction is an L-aminoacyl-L-amino acid + H2O = 2 an L-alpha-amino acid. It carries out the reaction leukotriene D4 + H2O = leukotriene E4 + glycine. The enzyme catalyses L-cystine-bis-glycine + 2 H2O = L-cystine + 2 glycine. It catalyses the reaction a beta-lactam + H2O = a substituted beta-amino acid. The catalysed reaction is glycyldehydrophenylalanine + H2O = 2,3-didehydrophenylalanine + glycine. With respect to regulation, inhibited by L-penicillamine. Inhibited by cilastatin. In terms of biological role, hydrolyzes a wide range of dipeptides including the conversion of leukotriene D4 to leukotriene E4. Hydrolyzes cystinyl-bis-glycine (cys-bis-gly) formed during glutathione degradation. Also possesses beta lactamase activity and hydrolytically inactivates beta-lactam antibiotics. Functionally, independently of its dipeptidase activity, acts as an adhesion receptor for neutrophil recruitment from bloodstream into inflamed lungs and liver. The sequence is that of Dipeptidase 1 (Dpep1) from Mus musculus (Mouse).